The sequence spans 376 residues: Glutamate 5-kinase (376 aa).

K15 contributes to the ATP binding site. Residues S55, D141, and N153 each contribute to the substrate site. Residues 173–174 and 215–221 each bind ATP; these read SD and TGGMQTK. In terms of domain architecture, PUA spans 280 to 361; it reads AGRLTVDAGA…HAIAEVLDEA (82 aa).

Belongs to the glutamate 5-kinase family.

It localises to the cytoplasm. The enzyme catalyses L-glutamate + ATP = L-glutamyl 5-phosphate + ADP. The protein operates within amino-acid biosynthesis; L-proline biosynthesis; L-glutamate 5-semialdehyde from L-glutamate: step 1/2. In terms of biological role, catalyzes the transfer of a phosphate group to glutamate to form L-glutamate 5-phosphate. In Salinibacter ruber (strain DSM 13855 / M31), this protein is Glutamate 5-kinase.